The chain runs to 87 residues: Acyl-CoA-binding protein (87 aa).

The residue at position 2 (serine 2) is an N-acetylserine. Positions 2–87 (SQAEFDKAAE…VEDLKKKYGI (86 aa)) constitute an ACB domain. Position 8 is an N6-acetyllysine; alternate (lysine 8). Lysine 8 carries the N6-succinyllysine; alternate modification. Lysine 14 contributes to the an acyl-CoA binding site. N6-succinyllysine is present on lysine 17. Residue lysine 19 is modified to N6-acetyllysine. Tyrosine 29 is subject to Phosphotyrosine. An acyl-CoA-binding positions include 29–33 (YSHYK), lysine 55, and tyrosine 74. Lysine 55 carries the N6-acetyllysine; alternate modification. Position 55 is an N6-succinyllysine; alternate (lysine 55). The residue at position 55 (lysine 55) is an N6-(2-hydroxyisobutyryl)lysine; alternate. At lysine 55 the chain carries N6-malonyllysine; alternate. Lysine 77 carries the N6-acetyllysine; alternate modification. N6-succinyllysine; alternate is present on lysine 77.

The protein belongs to the ACBP family. In terms of assembly, monomer.

Its subcellular location is the endoplasmic reticulum. The protein localises to the golgi apparatus. Functionally, binds medium- and long-chain acyl-CoA esters with very high affinity and may function as an intracellular carrier of acyl-CoA esters. This Canis lupus familiaris (Dog) protein is Acyl-CoA-binding protein (DBI).